Consider the following 131-residue polypeptide: D-ribose pyranase (131 aa).

The active-site Proton donor is histidine 20. Residues aspartate 28, histidine 98, and 120–122 (YAN) contribute to the substrate site.

The protein belongs to the RbsD / FucU family. RbsD subfamily. As to quaternary structure, homodecamer.

It localises to the cytoplasm. The enzyme catalyses beta-D-ribopyranose = beta-D-ribofuranose. Its pathway is carbohydrate metabolism; D-ribose degradation; D-ribose 5-phosphate from beta-D-ribopyranose: step 1/2. Catalyzes the interconversion of beta-pyran and beta-furan forms of D-ribose. The sequence is that of D-ribose pyranase from Bacillus cereus (strain B4264).